Here is a 317-residue protein sequence, read N- to C-terminus: Sperm acrosome membrane-associated protein 6 (317 aa).

The signal sequence occupies residues 1–18; it reads MFVFIAKLLIFSSVITSA. Residues 19-281 are Extracellular-facing; the sequence is FTCYQCFIDE…PSFSFWLPRP (263 aa). Intrachain disulfides connect cysteine 21–cysteine 143, cysteine 24–cysteine 146, cysteine 35–cysteine 51, cysteine 128–cysteine 151, and cysteine 132–cysteine 157. N-linked (GlcNAc...) asparagine glycosylation is present at asparagine 29. The 115-residue stretch at 123-237 folds into the Ig-like domain; that stretch reads PRVSGCLPPC…EVLSQEQSLV (115 aa). Residue asparagine 168 is glycosylated (N-linked (GlcNAc...) asparagine). A disulfide bond links cysteine 174 and cysteine 227. Residues 282–302 form a helical membrane-spanning segment; sequence ALLITCLTATMLLIFLSLGAM. Over 303 to 317 the chain is Cytoplasmic; the sequence is CRLWYQIRTNVSNPA.

Belongs to the SPACA6 family. In terms of assembly, forms a complex with izumo1 and tmem81 on spermatocyte cell membrane. The complex binds to oocyte protein bncr. As to expression, expressed in testis.

Its subcellular location is the cytoplasmic vesicle. It is found in the secretory vesicle. It localises to the acrosome membrane. Its function is as follows. Sperm protein required for fusion of sperm with the egg membrane during fertilization. May regulate the expression of sperm surface protein DCST2. In Danio rerio (Zebrafish), this protein is Sperm acrosome membrane-associated protein 6.